Here is an 836-residue protein sequence, read N- to C-terminus: MGLLSAVFGTYSEREVKRIRPIVSKINELDEVMQKLSDDELKAKTVEFKERLNNGETVDDILPEAFAVVREASKRVLNMKHYDEQLIGGIVLHQGRIAEMKTGEGKTLVATLPAYLNGLTGKGVHIITVNDYLAKRDAEQMGELYGFLGLTTGVIVHELTNEQRREAYNSDITYGTNNEFGFDYLRDNMVIYKEERVQRKLNFTIVDEVDSILIDEARTPLIISGQGEKSTEFYKVADYFVKTLVKEKDYTIDEKANAVMLTDEGFHKAEQTFKVENYADAENVELQHYVTQALKANYAMRRDKDYMVKDGEVIIVDEFTGRLMEGRRYSDGLHQAIEAKENVKIARESKTLATITFQNYFRMYEKLSGMTGTALTEENEFREIYGLDVIVVPTHKPVVRIDNPDLVFKSEKGKIMAVVDEIAKAHEVGQPVLVGTVSIEKSELISSMLKKKGVPHQVLNAKFHEQEAEIITHAGEKGMVTIATNMAGRGTDIKLGEGVLEIGGLKIIGTERHESRRIDNQLRGRSGRQGDSGESTFFISLEDDLMRIFGSEKIQGVVEKLGLEEDEAIESKLVSKSIENAQKKVEGNNFDIRKTLLGYDDVMNKQREVIYKQRAEVLEGEDVKEEILHMLRDVISDAVDTHIKEDAEDYRESFLYLISYLNDICIPTNEVNLPALTEMSKEEIIDHLYDVAVKSYEDKEAEFTSERLREIERVVLLRSVDTKWMDHINNMDNLKQGIGLRAFKQVDPVQAYQMEGSAMFEEMIDSIKKETVKMLLHVKVERAPERVRVAQETNAVHGDKPSAPVGPVRNLNKFGRNDVCPCGSGKKFKNCCGREA.

ATP contacts are provided by residues glutamine 85, 103 to 107 (GEGKT), and aspartate 492. 4 residues coordinate Zn(2+): cysteine 820, cysteine 822, cysteine 831, and cysteine 832.

The protein belongs to the SecA family. As to quaternary structure, monomer and homodimer. Part of the essential Sec protein translocation apparatus which comprises SecA, SecYEG and auxiliary proteins SecDF. Other proteins may also be involved. Requires Zn(2+) as cofactor.

It localises to the cell membrane. The protein localises to the cytoplasm. The enzyme catalyses ATP + H2O + cellular proteinSide 1 = ADP + phosphate + cellular proteinSide 2.. Its function is as follows. Part of the Sec protein translocase complex. Interacts with the SecYEG preprotein conducting channel. Has a central role in coupling the hydrolysis of ATP to the transfer of proteins into and across the cell membrane, serving as an ATP-driven molecular motor driving the stepwise translocation of polypeptide chains across the membrane. The chain is Protein translocase subunit SecA from Clostridium botulinum (strain Eklund 17B / Type B).